Reading from the N-terminus, the 110-residue chain is Body wall hemoglobin (110 aa).

The Globin domain maps to 2–110; it reads VNWAAVVDAF…GAVDAIISHF (109 aa). H70 contacts heme.

It belongs to the globin family. Homotetramer.

The chain is Body wall hemoglobin from Cerebratulus lacteus (Milky ribbon worm).